Consider the following 293-residue polypeptide: Protease HtpX (293 aa).

Helical transmembrane passes span 2–22 (FRIL…SVTL) and 38–58 (LTSL…ISLF). Residue His-145 coordinates Zn(2+). The active site involves Glu-146. Position 149 (His-149) interacts with Zn(2+). 2 helical membrane-spanning segments follow: residues 156 to 176 (VTLA…ARII) and 193 to 213 (IGFF…ASII). Glu-222 contributes to the Zn(2+) binding site.

This sequence belongs to the peptidase M48B family. Requires Zn(2+) as cofactor.

It is found in the cell inner membrane. The chain is Protease HtpX from Hahella chejuensis (strain KCTC 2396).